The primary structure comprises 336 residues: Serpentine receptor class alpha-10 (336 aa).

Residues 1–28 (MGPITANSSKCATEDQMILQTSLLLRIN) lie on the Extracellular side of the membrane. Residues 29-49 (VIIMTIVAIITFILTYKALFI) form a helical membrane-spanning segment. The Cytoplasmic portion of the chain corresponds to 50 to 61 (LKIRPIFHSSTK). Residues 62-82 (ILLYTSLLFVNVHAVIFMVIQ) form a helical membrane-spanning segment. Topologically, residues 83–107 (NTALIRSFTLSDKPCEIMRTTLECR) are extracellular. Residues 108–128 (FQNHVLIFGIAGVNFNQFGLT) form a helical membrane-spanning segment. At 129–148 (VDRLLATIIPQSYSHMGALP) the chain is on the cytoplasmic side. A helical transmembrane segment spans residues 149-169 (GVILSVLVVACSIAAPLIIAI). The Extracellular segment spans residues 170–192 (GDPYDDIVPNCFFFPEHSAPRAN). The chain crosses the membrane as a helical span at residues 193 to 213 (IFLVTLSTLVITSIFLNFIII). The Cytoplasmic portion of the chain corresponds to 214–243 (YANKKLEKGCRTRFYVTQRYQKREALISTR). The chain crosses the membrane as a helical span at residues 244-264 (IISYIAASQFLGLTLYSTMVL). Residues 265 to 280 (TLRLHKSMIPISIYHN) are Extracellular-facing. Residues 281–301 (MVWWAYTVPFAAVSLPALLIY) traverse the membrane as a helical segment. At 302-336 (RINQVGSNRKRVINRITAKVETQEEHMKSLKELWA) the chain is on the cytoplasmic side.

It belongs to the nematode receptor-like protein sra family. In terms of tissue distribution, expressed in the URX sensory neuron, the ALA interneuron and in additional interneurons, pharyngeal neurons and muscle.

It localises to the membrane. This is Serpentine receptor class alpha-10 (sra-10) from Caenorhabditis elegans.